A 507-amino-acid chain; its full sequence is MSCRSYRISPGCGVTRNFSSCSAVAPKTGNRCCISAAPFRGVSCYRGLTGFSSRSLCNPSPCGPRMAVGGFRSGSCGRSFGYRSGGVCGPSPPCITTVSVNESLLTPLNLEIDPNAQCVKYEEKEQIKCLNSKFAAFIDKVRFLEQQNKLLETKWQFYQNRKCCESNLEPLFGGYIEALRREAECVEADSGRLAAELNHVQEAMEGYKKKYEEEVALRATAENEFVVLKKDVDCAYLRKSDLEANVEALVEESSFLKRLYEEEVCVLQAHISDTSVIVKMDNSRDLNMDCVVAEIKAQYDDVASRSRAEAESWYRTKCEEMKATVIRHGETLRRTKEEINELNRMIQRLTAEIENAKCQRAKLEAAVAEAEQQGEAALADARCKLAELEGALQKAKQDMACLLKEYQEVMNSKLALDIEIATYRRLLEGEEQRLCEGVGSVNVCVSSSRGGVTCGGLTYGTTPGRQIVSGPSVTGGSITVMAPDSCSPCQPRASSFTCGSSRSVRFA.

The tract at residues 1-123 (MSCRSYRISP…PNAQCVKYEE (123 aa)) is head. The region spanning 123–434 (EKEQIKCLNS…RLLEGEEQRL (312 aa)) is the IF rod domain. Residues 124-158 (KEQIKCLNSKFAAFIDKVRFLEQQNKLLETKWQFY) form a coil 1A region. Positions 159–168 (QNRKCCESNL) are linker 1. Positions 169-269 (EPLFGGYIEA…YEEEVCVLQA (101 aa)) are coil 1B. Lys229 participates in a covalent cross-link: Glycyl lysine isopeptide (Lys-Gly) (interchain with G-Cter in SUMO1). A linker 12 region spans residues 270–286 (HISDTSVIVKMDNSRDL). Residues 287–430 (NMDCVVAEIK…ATYRRLLEGE (144 aa)) are coil 2. Positions 431 to 507 (EQRLCEGVGS…CGSSRSVRFA (77 aa)) are tail.

The protein belongs to the intermediate filament family. Heterotetramer of two type I and two type II keratins.

The polypeptide is Keratin, type II cuticular Hb5 (Krt85) (Mus musculus (Mouse)).